The sequence spans 374 residues: Translocating chain-associated membrane protein 1 (374 aa).

Over 1–29 (MAIRKKSTKSPPVLSHEFVLQNHADIVSC) the chain is Cytoplasmic. Residues 30–50 (VAMVFLLGLMFEITAKASIIF) form a helical membrane-spanning segment. Over 51-76 (VTLQYNVTLPATEEQATESASLYYYG) the chain is Lumenal. Residue asparagine 56 is glycosylated (N-linked (GlcNAc...) asparagine). A helical membrane pass occupies residues 77–97 (IKDLATVFFYMLVAIIIHAVI). The Cytoplasmic portion of the chain corresponds to 98 to 121 (QEYMLDKINRRMHFSKTKHSKFNE). The 210-residue stretch at 117 to 326 (SKFNESGQLS…NFQLRRWREH (210 aa)) folds into the TLC domain. Residues 122-142 (SGQLSAFYLFACVWGTFILIS) traverse the membrane as a helical segment. Residues 143-159 (ENYISDPTILWRAYPHN) are Lumenal-facing. A helical membrane pass occupies residues 160–180 (LMTFQMKFFYISQLAYWLHAF). Residues 181 to 192 (PELYFQKTKRED) are Cytoplasmic-facing. Residues 193–213 (IPRQLVYIGLYLFHIAGAYLL) traverse the membrane as a helical segment. Residue asparagine 214 is a topological domain, lumenal. Residues 215-235 (LNHLGLVLLVLHYFVEFLFHI) form a helical membrane-spanning segment. Residues 236-251 (SRLFYFSNEKYQKGFS) are Cytoplasmic-facing. The chain crosses the membrane as a helical span at residues 252–272 (LWAVLFVLGRLLTLILSVLTV). The Lumenal portion of the chain corresponds to 273 to 297 (GFGLARAENQKLDFSTGNFNVLAVR). The helical transmembrane segment at 298-318 (IAVLASICITQAFMVWKFINF) threads the bilayer. The Cytoplasmic segment spans residues 319–374 (QLRRWREHSAFQAPAVKKKPTVTKGRSSKKGTENGVNGTLTSNVADSPRNKKEKSS). The span at 334-347 (VKKKPTVTKGRSSK) shows a compositional bias: basic residues. Positions 334-374 (VKKKPTVTKGRSSKKGTENGVNGTLTSNVADSPRNKKEKSS) are disordered. Over residues 352–363 (NGVNGTLTSNVA) the composition is skewed to polar residues. Serine 365 is subject to Phosphoserine.

Belongs to the TRAM family. Interacts with SEC61B. May interact with Derlin-1/DERL1. Post-translationally, N-glycosylated.

It localises to the endoplasmic reticulum membrane. In terms of biological role, involved in the translocation of nascent protein chains into or through the endoplasmic reticulum (ER) membrane by facilitating the proper chain positioning at the SEC61 channel. Regulates the exposure of nascent secretory protein chain to the cytosol during translocation into the ER. May affect the phospholipid bilayer in the vicinity of the lateral gate of the SEC61 channel, thereby facilitating ER protein transport. Intimately associates with transmembrane (TM) domain of nascent membrane proteins during the entire integration process into the ER membrane. Associates with the second TM domain of G-protein-coupled receptor opsin/OPSD nascent chain in the ER membrane, which may facilitate its integration into the membrane. Under conditions of ER stress, participates in the disposal of misfolded ER membrane proteins during the unfolded protein response (UPR), an integrated stress response (ISR) pathway, by selectively retrotranslocating misfolded ER-membrane proteins from the ER into the cytosol where they are ubiquitinated and degraded by the proteasome. The chain is Translocating chain-associated membrane protein 1 (TRAM1) from Pongo abelii (Sumatran orangutan).